Consider the following 394-residue polypeptide: Probable tRNA sulfurtransferase (394 aa).

Residues 61-168 (DETVATLSRI…PMINIYSEEI (108 aa)) enclose the THUMP domain. ATP-binding positions include 185-186 (LL), 210-211 (YF), Arg267, Gly289, and Gln298.

Belongs to the ThiI family.

It localises to the cytoplasm. It carries out the reaction [ThiI sulfur-carrier protein]-S-sulfanyl-L-cysteine + a uridine in tRNA + 2 reduced [2Fe-2S]-[ferredoxin] + ATP + H(+) = [ThiI sulfur-carrier protein]-L-cysteine + a 4-thiouridine in tRNA + 2 oxidized [2Fe-2S]-[ferredoxin] + AMP + diphosphate. The catalysed reaction is [ThiS sulfur-carrier protein]-C-terminal Gly-Gly-AMP + S-sulfanyl-L-cysteinyl-[cysteine desulfurase] + AH2 = [ThiS sulfur-carrier protein]-C-terminal-Gly-aminoethanethioate + L-cysteinyl-[cysteine desulfurase] + A + AMP + 2 H(+). Its pathway is cofactor biosynthesis; thiamine diphosphate biosynthesis. Functionally, catalyzes the ATP-dependent transfer of a sulfur to tRNA to produce 4-thiouridine in position 8 of tRNAs, which functions as a near-UV photosensor. Also catalyzes the transfer of sulfur to the sulfur carrier protein ThiS, forming ThiS-thiocarboxylate. This is a step in the synthesis of thiazole, in the thiamine biosynthesis pathway. The sulfur is donated as persulfide by IscS. This chain is Probable tRNA sulfurtransferase, found in Agathobacter rectalis (strain ATCC 33656 / DSM 3377 / JCM 17463 / KCTC 5835 / VPI 0990) (Eubacterium rectale).